Reading from the N-terminus, the 921-residue chain is Sodium/calcium exchanger 2 (921 aa).

The first 20 residues, 1–20 (MAPLALMGVVLLLGVPHCLG), serve as a signal peptide directing secretion. A disordered region spans residues 23 to 42 (TPTPSLPPPTANDSDASPEG). Residues 69 to 89 (VARAVVYFVAMVYMFLGVSII) traverse the membrane as a helical segment. Residues N125 and N130 are each glycosylated (N-linked (GlcNAc...) asparagine). 4 helical membrane passes run 131 to 151 (LTLM…IEVC), 165 to 185 (IVGS…YVIP), 197 to 217 (VFFV…LILA), and 226 to 246 (VWEA…AWMA). A putative calmodulin-binding region region spans residues 248–267 (KRLLFYKYVYKRYRTDPRSG). A disordered region spans residues 371–391 (HAADAARRPGATDGAPDDEDD). Calx-beta domains are found at residues 389–482 (EDDG…FVRL) and 512–611 (ATVT…FIEL). Positions 407, 443, 468, 469, 471, 473, 476, 518, 519, 520, 536, 598, 599, and 600 each coordinate Ca(2+). S622 is subject to Phosphoserine. Residue E665 participates in Ca(2+) binding. 6 consecutive transmembrane segments (helical) span residues 721 to 741 (CFDY…ACVP), 749 to 769 (WACF…IGDL), 786 to 806 (VVFV…VAAL), 823 to 843 (AVNV…YWAV), 855 to 875 (LAFS…VLLY), and 893 to 913 (LATT…SSLE).

It belongs to the Ca(2+):cation antiporter (CaCA) (TC 2.A.19) family. SLC8 subfamily. As to expression, detected in kidney cortex, in distal convoluted tubules and connecting segments. Detected in brain and spinal cord (at protein level). Detected in brain, especially in hippocampus CA1, CA2 and CA3 fiels, dentate gyrus, cerebellum and brain cortex.

Its subcellular location is the cell membrane. It localises to the basolateral cell membrane. The enzyme catalyses Ca(2+)(in) + 3 Na(+)(out) = Ca(2+)(out) + 3 Na(+)(in). With respect to regulation, calcium transport is down-regulated by Na(+) and stimulated by Ca(2+). Mediates the electrogenic exchange of Ca(2+) against Na(+) ions across the cell membrane, and thereby contributes to the regulation of cytoplasmic Ca(2+) levels and Ca(2+)-dependent cellular processes. Contributes to cellular Ca(2+) homeostasis in excitable cells. Contributes to the rapid decrease of cytoplasmic Ca(2+) levels back to baseline after neuronal activation, and thereby contributes to modulate synaptic plasticity, learning and memory. Plays a role in regulating urinary Ca(2+) and Na(+) excretion. This Mus musculus (Mouse) protein is Sodium/calcium exchanger 2.